We begin with the raw amino-acid sequence, 414 residues long: Apolipoprotein N-acyltransferase (414 aa).

6 helical membrane-spanning segments follow: residues 19-39, 40-60, 63-83, 91-111, 121-141, and 153-173; these read GIAL…HFGI, TSPL…LKLP, SGFA…ALSF, LIPF…SMAL, LLLW…VPEV, and LSFG…QRWL. In terms of domain architecture, CN hydrolase spans 202 to 414; that stretch reads IETHIPQEIR…NRSPSGIIAP (213 aa). E243 functions as the Proton acceptor in the catalytic mechanism. K298 is an active-site residue. C351 functions as the Nucleophile in the catalytic mechanism.

This sequence belongs to the CN hydrolase family. Apolipoprotein N-acyltransferase subfamily.

It localises to the cell inner membrane. It carries out the reaction N-terminal S-1,2-diacyl-sn-glyceryl-L-cysteinyl-[lipoprotein] + a glycerophospholipid = N-acyl-S-1,2-diacyl-sn-glyceryl-L-cysteinyl-[lipoprotein] + a 2-acyl-sn-glycero-3-phospholipid + H(+). It functions in the pathway protein modification; lipoprotein biosynthesis (N-acyl transfer). Catalyzes the phospholipid dependent N-acylation of the N-terminal cysteine of apolipoprotein, the last step in lipoprotein maturation. The protein is Apolipoprotein N-acyltransferase of Wolinella succinogenes (strain ATCC 29543 / DSM 1740 / CCUG 13145 / JCM 31913 / LMG 7466 / NCTC 11488 / FDC 602W) (Vibrio succinogenes).